We begin with the raw amino-acid sequence, 88 residues long: Putative sulfur carrier protein AF_0552 (88 aa).

It belongs to the sulfur carrier protein CysO family.

The protein is Putative sulfur carrier protein AF_0552 of Archaeoglobus fulgidus (strain ATCC 49558 / DSM 4304 / JCM 9628 / NBRC 100126 / VC-16).